The chain runs to 157 residues: MSKHKVSPATIAKNKKALHDYTILEKFEAGIVLQGWEVKSIRAGKVQMVDSHVHIKHGEAWLFNCLITPLLSASTHVVADAAATRKLLLNRREINKIMGRIEQKGFTCIPLSMYWKGPRVKVEIALAQGKKVHDKRQAQKDKDWAREKDRLFKKAYK.

The tract at residues 132-157 (VHDKRQAQKDKDWAREKDRLFKKAYK) is disordered. The segment covering 135 to 157 (KRQAQKDKDWAREKDRLFKKAYK) has biased composition (basic and acidic residues).

The protein belongs to the SmpB family.

The protein localises to the cytoplasm. In terms of biological role, required for rescue of stalled ribosomes mediated by trans-translation. Binds to transfer-messenger RNA (tmRNA), required for stable association of tmRNA with ribosomes. tmRNA and SmpB together mimic tRNA shape, replacing the anticodon stem-loop with SmpB. tmRNA is encoded by the ssrA gene; the 2 termini fold to resemble tRNA(Ala) and it encodes a 'tag peptide', a short internal open reading frame. During trans-translation Ala-aminoacylated tmRNA acts like a tRNA, entering the A-site of stalled ribosomes, displacing the stalled mRNA. The ribosome then switches to translate the ORF on the tmRNA; the nascent peptide is terminated with the 'tag peptide' encoded by the tmRNA and targeted for degradation. The ribosome is freed to recommence translation, which seems to be the essential function of trans-translation. The polypeptide is SsrA-binding protein (Francisella tularensis subsp. tularensis (strain FSC 198)).